The following is a 306-amino-acid chain: UDP-3-O-acyl-N-acetylglucosamine deacetylase (306 aa).

His79, His238, and Asp242 together coordinate Zn(2+). His265 (proton donor) is an active-site residue.

Belongs to the LpxC family. Zn(2+) is required as a cofactor.

The enzyme catalyses a UDP-3-O-[(3R)-3-hydroxyacyl]-N-acetyl-alpha-D-glucosamine + H2O = a UDP-3-O-[(3R)-3-hydroxyacyl]-alpha-D-glucosamine + acetate. Its pathway is glycolipid biosynthesis; lipid IV(A) biosynthesis; lipid IV(A) from (3R)-3-hydroxytetradecanoyl-[acyl-carrier-protein] and UDP-N-acetyl-alpha-D-glucosamine: step 2/6. Functionally, catalyzes the hydrolysis of UDP-3-O-myristoyl-N-acetylglucosamine to form UDP-3-O-myristoylglucosamine and acetate, the committed step in lipid A biosynthesis. This chain is UDP-3-O-acyl-N-acetylglucosamine deacetylase, found in Shewanella oneidensis (strain ATCC 700550 / JCM 31522 / CIP 106686 / LMG 19005 / NCIMB 14063 / MR-1).